The following is a 43-amino-acid chain: Protein PsbN (43 aa).

The chain crosses the membrane as a helical span at residues Leu7–Phe27.

The protein belongs to the PsbN family.

The protein localises to the cellular thylakoid membrane. Its function is as follows. May play a role in photosystem I and II biogenesis. The polypeptide is Protein PsbN (Trichodesmium erythraeum (strain IMS101)).